The following is a 368-amino-acid chain: WAT1-related protein At5g40240 (368 aa).

The next 10 helical transmembrane spans lie at 18–38 (VVPF…NTLF), 50–70 (VFVF…SVIF), 82–102 (PLFF…IAGC), 111–131 (TLAS…AVIF), 142–162 (ATQA…VVVL), 194–214 (WIIG…WYIL), 226–246 (ITVV…VCLF), 260–280 (ISLA…ALTH), 292–312 (ISLF…IFLG), and 315–335 (LHLG…TVIW). 2 consecutive EamA domains span residues 33–161 (GSNT…LVVV) and 208–334 (ISVW…YTVI).

It belongs to the drug/metabolite transporter (DMT) superfamily. Plant drug/metabolite exporter (P-DME) (TC 2.A.7.4) family.

It is found in the membrane. This is WAT1-related protein At5g40240 from Arabidopsis thaliana (Mouse-ear cress).